The sequence spans 630 residues: CREB-regulated transcription coactivator 1 (630 aa).

Phosphoserine occurs at positions 64 and 113. Disordered stretches follow at residues 142–174 (ADTS…GPQD), 187–221 (GMEE…VPGI), 256–331 (SPLP…LSPL), and 356–475 (QAGS…HTST). Thr-149 carries the phosphothreonine modification. At Ser-151 the chain carries Phosphoserine; by SIK1 and SIK2. The segment covering 151-167 (SDSALHQSTMTPTQAES) has biased composition (polar residues). Thr-161 bears the Phosphothreonine mark. Residues 194-208 (ETDKTLSKQSWDSKK) are compositionally biased toward basic and acidic residues. The Nuclear export signal motif lies at 242–258 (TGGSLPDLSTIHFPSPL). The span at 256-270 (SPLPTPLDPEEPPFP) shows a compositional bias: pro residues. Composition is skewed to polar residues over residues 292–301 (GMNTPSSSPQ) and 310–331 (LSLS…LSPL). The span at 361 to 384 (QPPPQPQPPPPPPPVSQQQPPPPQ) shows a compositional bias: pro residues. A compositionally biased stretch (low complexity) spans 385 to 394 (VSVGLPQGGP). Polar residues-rich tracts occupy residues 414 to 426 (VPST…TESP) and 450 to 475 (PATQ…HTST).

It belongs to the TORC family. As to quaternary structure, binds, as a tetramer, through its N-terminal region, with the bZIP domain of CREB1. 'Arg-314' in the bZIP domain of CREB1 is essential for this interaction. Interaction, via its C-terminal, with TAF4, enhances recruitment of TAF4 to CREB1. Interacts with 14-3-3 proteins, including YWHAE/14-3-3 epsilon. Interacts with calmodulin-dependent catalytic subunit PPP3CA/calcineurin A. Post-translationally, phosphorylation/dephosphorylation states of Ser-151 are required for regulating transduction of CREB activity. TORCs are inactive when phosphorylated, and active when dephosphorylated at this site. This primary site of phosphorylation is mediated by SIKs (SIK1 and SIK2), is regulated by cAMP and calcium levels and is dependent on the phosphorylation of SIKs by LKB1. Highly expressed in developing cortical neurons, peaking during dendrite development.

The protein resides in the cytoplasm. Its subcellular location is the nucleus. Its function is as follows. Transcriptional coactivator for CREB1 which activates transcription through both consensus and variant cAMP response element (CRE) sites. Acts as a coactivator, in the SIK/TORC signaling pathway, being active when dephosphorylated and acts independently of CREB1 'Ser-133' phosphorylation. Enhances the interaction of CREB1 with TAF4. Regulates the expression of specific CREB-activated genes such as the steroidogenic gene, StAR. Potent coactivator of PGC1alpha and inducer of mitochondrial biogenesis in muscle cells. In the hippocampus, involved in late-phase long-term potentiation (L-LTP) maintenance at the Schaffer collateral-CA1 synapses. May be required for dendritic growth of developing cortical neurons. In concert with SIK1, regulates the light-induced entrainment of the circadian clock. In response to light stimulus, coactivates the CREB-mediated transcription of PER1 which plays an important role in the photic entrainment of the circadian clock. This Rattus norvegicus (Rat) protein is CREB-regulated transcription coactivator 1 (Crtc1).